The primary structure comprises 425 residues: Succinate--CoA ligase [ADP-forming] subunit beta, mitochondrial (425 aa).

Residues 1–14 (NNHGLQIQQQQQRN) constitute a mitochondrion transit peptide. The ATP-grasp domain occupies 23 to 250 (MELLQEAGVS…SNSAYRQKKI (228 aa)). At Lys40 the chain carries N6-acetyllysine. Tyr46 carries the post-translational modification Phosphotyrosine. Residue Lys50 is modified to N6-acetyllysine; alternate. Position 50 is an N6-succinyllysine; alternate (Lys50). Residues Lys60 and 67–69 (GRG) each bind ATP. Residues Lys91, Lys101, Lys105, and Lys178 each carry the N6-acetyllysine modification. 2 residues coordinate Mg(2+): Asn220 and Asp234. Position 241 is a phosphoserine (Ser241). Residue Asn285 participates in substrate binding. Phosphothreonine is present on Thr303. N6-acetyllysine is present on Lys330. 342–344 (GIM) contacts substrate. Lys400 is subject to N6-acetyllysine.

This sequence belongs to the succinate/malate CoA ligase beta subunit family. ATP-specific subunit beta subfamily. As to quaternary structure, heterodimer of an alpha and a beta subunit. The beta subunit determines specificity for ATP. Interacts with ALAS2. Requires Mg(2+) as cofactor.

It is found in the mitochondrion. It catalyses the reaction succinate + ATP + CoA = succinyl-CoA + ADP + phosphate. Its pathway is carbohydrate metabolism; tricarboxylic acid cycle; succinate from succinyl-CoA (ligase route): step 1/1. Its function is as follows. ATP-specific succinyl-CoA synthetase functions in the citric acid cycle (TCA), coupling the hydrolysis of succinyl-CoA to the synthesis of ATP and thus represents the only step of substrate-level phosphorylation in the TCA. The beta subunit provides nucleotide specificity of the enzyme and binds the substrate succinate, while the binding sites for coenzyme A and phosphate are found in the alpha subunit. The sequence is that of Succinate--CoA ligase [ADP-forming] subunit beta, mitochondrial from Sus scrofa (Pig).